We begin with the raw amino-acid sequence, 461 residues long: High-affinity Na(+)/H(+) antiporter NhaS3 (461 aa).

Helical transmembrane passes span 22–42 (TEIAPLVLAGVLLSLVVIYFA), 58–78 (VLGELVGGVLVGVSALKLLLF), 113–133 (SEVISVISELGVIILLFEIGL), 148–170 (AIVAVVGVVTPFSLGTIGLMTIF), 175–197 (IPAIFAGAALTATSIGITAKVLA), 209–229 (IIIGAAVLDDILGIIVLAVVG), 239–259 (ISNIIYLILSATGFVVGSILI), 280–300 (LLLVSICVAFVLSYIAQIVQL), 360–380 (GLIIAAFLILVAIVGKVVTGF), 391–411 (LAIGVGMIPRGEVGLVFAGVG), and 424–444 (AIIVMVIVTTFVAPPWLRAVF).

Belongs to the monovalent cation:proton antiporter 2 (CPA2) transporter (TC 2.A.37) family.

Its subcellular location is the cellular thylakoid membrane. In terms of biological role, na(+)/H(+) antiporter that transports sodium from the cytoplasm into the thylakoid lumen in exchange for protons. Contributes to sodium homeostasis and tolerance. Also has Li(+)/H(+) antiport activity under K(+)-free conditions, but not under K(+)-rich conditions. This is High-affinity Na(+)/H(+) antiporter NhaS3 (nhaS3) from Synechocystis sp. (strain ATCC 27184 / PCC 6803 / Kazusa).